Here is a 348-residue protein sequence, read N- to C-terminus: Methylthioribose-1-phosphate isomerase (348 aa).

Substrate is bound by residues 48–50 (RGA), arginine 90, and glutamine 195. Aspartate 236 acts as the Proton donor in catalysis. 246 to 247 (NK) lines the substrate pocket.

This sequence belongs to the eIF-2B alpha/beta/delta subunits family. MtnA subfamily.

The catalysed reaction is 5-(methylsulfanyl)-alpha-D-ribose 1-phosphate = 5-(methylsulfanyl)-D-ribulose 1-phosphate. It participates in amino-acid biosynthesis; L-methionine biosynthesis via salvage pathway; L-methionine from S-methyl-5-thio-alpha-D-ribose 1-phosphate: step 1/6. Catalyzes the interconversion of methylthioribose-1-phosphate (MTR-1-P) into methylthioribulose-1-phosphate (MTRu-1-P). The protein is Methylthioribose-1-phosphate isomerase of Exiguobacterium sibiricum (strain DSM 17290 / CCUG 55495 / CIP 109462 / JCM 13490 / 255-15).